We begin with the raw amino-acid sequence, 660 residues long: Bifunctional polymyxin resistance protein ArnA (660 aa).

The interval 1–304 (MKTVVFAYHD…TLGLVQGSRL (304 aa)) is formyltransferase ArnAFT. 86 to 88 (HLI) contacts (6R)-10-formyltetrahydrofolate. The active-site Proton donor; for formyltransferase activity is histidine 104. Residues arginine 114 and 136–140 (VKRAD) each bind (6R)-10-formyltetrahydrofolate. The interval 314 to 660 (RRTRVLILGV…RTVDLTDKPS (347 aa)) is dehydrogenase ArnADH. NAD(+) contacts are provided by residues aspartate 347 and 368 to 369 (DI). UDP-alpha-D-glucuronate contacts are provided by residues alanine 393, tyrosine 398, and 432 to 433 (TS). Catalysis depends on glutamate 434, which acts as the Proton acceptor; for decarboxylase activity. UDP-alpha-D-glucuronate-binding positions include arginine 460, asparagine 492, 526–535 (KLIDGGKQKR), and tyrosine 613. Residue arginine 619 is the Proton donor; for decarboxylase activity of the active site.

It in the N-terminal section; belongs to the Fmt family. UDP-L-Ara4N formyltransferase subfamily. This sequence in the C-terminal section; belongs to the NAD(P)-dependent epimerase/dehydratase family. UDP-glucuronic acid decarboxylase subfamily. In terms of assembly, homohexamer, formed by a dimer of trimers.

It catalyses the reaction UDP-alpha-D-glucuronate + NAD(+) = UDP-beta-L-threo-pentopyranos-4-ulose + CO2 + NADH. The catalysed reaction is UDP-4-amino-4-deoxy-beta-L-arabinose + (6R)-10-formyltetrahydrofolate = UDP-4-deoxy-4-formamido-beta-L-arabinose + (6S)-5,6,7,8-tetrahydrofolate + H(+). It participates in nucleotide-sugar biosynthesis; UDP-4-deoxy-4-formamido-beta-L-arabinose biosynthesis; UDP-4-deoxy-4-formamido-beta-L-arabinose from UDP-alpha-D-glucuronate: step 1/3. It functions in the pathway nucleotide-sugar biosynthesis; UDP-4-deoxy-4-formamido-beta-L-arabinose biosynthesis; UDP-4-deoxy-4-formamido-beta-L-arabinose from UDP-alpha-D-glucuronate: step 3/3. The protein operates within bacterial outer membrane biogenesis; lipopolysaccharide biosynthesis. In terms of biological role, bifunctional enzyme that catalyzes the oxidative decarboxylation of UDP-glucuronic acid (UDP-GlcUA) to UDP-4-keto-arabinose (UDP-Ara4O) and the addition of a formyl group to UDP-4-amino-4-deoxy-L-arabinose (UDP-L-Ara4N) to form UDP-L-4-formamido-arabinose (UDP-L-Ara4FN). The modified arabinose is attached to lipid A and is required for resistance to polymyxin and cationic antimicrobial peptides. The sequence is that of Bifunctional polymyxin resistance protein ArnA from Escherichia coli (strain SE11).